We begin with the raw amino-acid sequence, 291 residues long: MTILAIDIGGTKLAAALIGADGQIRDRRELPTPASQTPEALRDALSALVSPLQAHAQRVAIASTGIIRDGSLLALNPHNLGGLLHFPLVKTLEQLTNLPTIAINDAQAAAWAEYQALEGDITDMVFITVSTGVGGGVVSGGKLLTGPGGLAGHIGHTLADPHGPVCGCGRTGCVEAIASGRGIAAAAQGELAGADARTIFTRAGQGDEQAQQLIHRSARTLARLIADIKATTDCQCVVVGGSVGLAEGYLALVEMYLAQEPAAFHVDLLAAHYRHDAGLLGAALLAQGEKL.

Residues 5–12 and 132–139 contribute to the ATP site; these read AIDIGGTK and GVGGGVVS. Zn(2+) contacts are provided by His156, Cys166, Cys168, and Cys173.

This sequence belongs to the ROK (NagC/XylR) family. NanK subfamily. In terms of assembly, homodimer.

The catalysed reaction is an N-acyl-D-mannosamine + ATP = an N-acyl-D-mannosamine 6-phosphate + ADP + H(+). It functions in the pathway amino-sugar metabolism; N-acetylneuraminate degradation; D-fructose 6-phosphate from N-acetylneuraminate: step 2/5. In terms of biological role, catalyzes the phosphorylation of N-acetylmannosamine (ManNAc) to ManNAc-6-P. This chain is N-acetylmannosamine kinase, found in Shigella flexneri serotype 5b (strain 8401).